The sequence spans 55 residues: ATP synthase F(0) complex subunit 8 (55 aa).

Residues 4–24 form a helical membrane-spanning segment; it reads LNPAPWFMIFMFTWAIFLTIL. Positions 34–55 are disordered; sequence PNEPSPQGMTTPKTAPWNWPWH.

This sequence belongs to the ATPase protein 8 family. As to quaternary structure, component of the ATP synthase complex composed at least of ATP5F1A/subunit alpha, ATP5F1B/subunit beta, ATP5MC1/subunit c (homooctomer), MT-ATP6/subunit a, MT-ATP8/subunit 8, ATP5ME/subunit e, ATP5MF/subunit f, ATP5MG/subunit g, ATP5MK/subunit k, ATP5MJ/subunit j, ATP5F1C/subunit gamma, ATP5F1D/subunit delta, ATP5F1E/subunit epsilon, ATP5PF/subunit F6, ATP5PB/subunit b, ATP5PD/subunit d, ATP5PO/subunit OSCP. ATP synthase complex consists of a soluble F(1) head domain (subunits alpha(3) and beta(3)) - the catalytic core - and a membrane F(0) domain - the membrane proton channel (subunits c, a, 8, e, f, g, k and j). These two domains are linked by a central stalk (subunits gamma, delta, and epsilon) rotating inside the F1 region and a stationary peripheral stalk (subunits F6, b, d, and OSCP).

It localises to the mitochondrion membrane. Functionally, subunit 8, of the mitochondrial membrane ATP synthase complex (F(1)F(0) ATP synthase or Complex V) that produces ATP from ADP in the presence of a proton gradient across the membrane which is generated by electron transport complexes of the respiratory chain. ATP synthase complex consist of a soluble F(1) head domain - the catalytic core - and a membrane F(1) domain - the membrane proton channel. These two domains are linked by a central stalk rotating inside the F(1) region and a stationary peripheral stalk. During catalysis, ATP synthesis in the catalytic domain of F(1) is coupled via a rotary mechanism of the central stalk subunits to proton translocation. In vivo, can only synthesize ATP although its ATP hydrolase activity can be activated artificially in vitro. Part of the complex F(0) domain. This is ATP synthase F(0) complex subunit 8 from Gadus morhua (Atlantic cod).